Reading from the N-terminus, the 245-residue chain is tRNA1(Val) (adenine(37)-N6)-methyltransferase (245 aa).

This sequence belongs to the methyltransferase superfamily. tRNA (adenine-N(6)-)-methyltransferase family.

The protein localises to the cytoplasm. The enzyme catalyses adenosine(37) in tRNA1(Val) + S-adenosyl-L-methionine = N(6)-methyladenosine(37) in tRNA1(Val) + S-adenosyl-L-homocysteine + H(+). In terms of biological role, specifically methylates the adenine in position 37 of tRNA(1)(Val) (anticodon cmo5UAC). This chain is tRNA1(Val) (adenine(37)-N6)-methyltransferase, found in Escherichia coli O7:K1 (strain IAI39 / ExPEC).